Here is a 393-residue protein sequence, read N- to C-terminus: MAKESYKRDKPHVNIGTIGHVDHGKTTLTAAITSVLAKQGLAAARDFGSIDKAPEERERGITISTAHVEYQTKKRHYAHIDCPGHADYIKNMITGAAQMDGAILVVAGTDGPMPQTREHILLARQVNVPSLVVFLNKVDIADPELIELVELELRELLTQYNFPGDDIPIVKGSALKALEGDPEGEKAIMELMDAVDSFIPDPVRDIDKPFLMPVEDVFSISGRGTVGTGRIERGRIKINEEVEIVGLRPTRKSVVTGIEMFQKLLDEGQAGDNAGLLLRGVDKTELERGMVIAKPGTIKPHTKFKAEVYILKKEEGGRHTPFFNGYRPQFYFRTTDVTGSVTLPEGVEMVMPGDNLGVEVELLAPIAMDEGLRFAIREGGRTVGAGSVTTIIE.

Positions Lys-10–Val-203 constitute a tr-type G domain. The G1 stretch occupies residues Gly-19–Thr-26. A GTP-binding site is contributed by Gly-19 to Thr-26. Thr-26 provides a ligand contact to Mg(2+). Residues Gly-60–Ser-64 form a G2 region. Positions Asp-81–Gly-84 are G3. GTP-binding positions include Asp-81 to His-85 and Asn-136 to Asp-139. A G4 region spans residues Asn-136–Asp-139. The tract at residues Ser-173–Leu-175 is G5.

It belongs to the TRAFAC class translation factor GTPase superfamily. Classic translation factor GTPase family. EF-Tu/EF-1A subfamily. Monomer.

The protein resides in the cytoplasm. The enzyme catalyses GTP + H2O = GDP + phosphate + H(+). In terms of biological role, GTP hydrolase that promotes the GTP-dependent binding of aminoacyl-tRNA to the A-site of ribosomes during protein biosynthesis. This Pelodictyon phaeoclathratiforme (strain DSM 5477 / BU-1) protein is Elongation factor Tu.